The chain runs to 1225 residues: DNA-directed RNA polymerase subunit beta' (1225 aa).

Zn(2+) contacts are provided by cysteine 60, cysteine 62, cysteine 75, and cysteine 78. Mg(2+)-binding residues include aspartate 450, aspartate 452, and aspartate 454. Cysteine 818, cysteine 892, cysteine 899, and cysteine 902 together coordinate Zn(2+).

It belongs to the RNA polymerase beta' chain family. The RNAP catalytic core consists of 2 alpha, 1 beta, 1 beta' and 1 omega subunit. When a sigma factor is associated with the core the holoenzyme is formed, which can initiate transcription. Mg(2+) is required as a cofactor. Requires Zn(2+) as cofactor.

The catalysed reaction is RNA(n) + a ribonucleoside 5'-triphosphate = RNA(n+1) + diphosphate. In terms of biological role, DNA-dependent RNA polymerase catalyzes the transcription of DNA into RNA using the four ribonucleoside triphosphates as substrates. This is DNA-directed RNA polymerase subunit beta' from Streptococcus pneumoniae serotype 19F (strain G54).